We begin with the raw amino-acid sequence, 508 residues long: Photosystem II CP47 reaction center protein (508 aa).

A run of 6 helical transmembrane segments spans residues 21–36 (AVHI…WAGS), 101–115 (IVFS…TWHW), 140–156 (GIHL…FGAF), 203–218 (VAAG…FHLS), 237–252 (VLSS…AFIV), and 457–472 (TFAL…HGAR).

This sequence belongs to the PsbB/PsbC family. PsbB subfamily. As to quaternary structure, PSII is composed of 1 copy each of membrane proteins PsbA, PsbB, PsbC, PsbD, PsbE, PsbF, PsbH, PsbI, PsbJ, PsbK, PsbL, PsbM, PsbT, PsbX, PsbY, PsbZ, Psb30/Ycf12, at least 3 peripheral proteins of the oxygen-evolving complex and a large number of cofactors. It forms dimeric complexes. It depends on Binds multiple chlorophylls. PSII binds additional chlorophylls, carotenoids and specific lipids. as a cofactor.

It localises to the plastid. Its subcellular location is the chloroplast thylakoid membrane. Functionally, one of the components of the core complex of photosystem II (PSII). It binds chlorophyll and helps catalyze the primary light-induced photochemical processes of PSII. PSII is a light-driven water:plastoquinone oxidoreductase, using light energy to abstract electrons from H(2)O, generating O(2) and a proton gradient subsequently used for ATP formation. The polypeptide is Photosystem II CP47 reaction center protein (Welwitschia mirabilis (Tree tumbo)).